The sequence spans 898 residues: Coatomer subunit gamma (898 aa).

HEAT repeat units follow at residues 62–99 (TEATDIFFAATKLFQSKDIPLRRLMYLLLKELSTISQD), 170–207 (EIVKRWANEVQEAISNKSNMVQYHALALLHRIKQHDRL), 280–317 (KEINSAVGVLQNFLNSTKPTLRFAAVRTLNKLAQTNPT), 319–352 (VIPCNLDMENLITDTNRSIATLAITTLLKVGNES), 353–389 (NVERLIKQIANFLGDINDEFKIVVVDAITSLSQKFPK), and 392–427 (KHLIIFLNKILRDEGTLQLKQATLDAILTVVNNIPE). Residues 592-631 (GKSPFSTGASKKGDSVTGTPKSNNASNNNNNNEESSGPES) form a disordered region. Low complexity predominate over residues 613 to 626 (SNNASNNNNNNEES).

The protein belongs to the COPG family. Oligomeric complex that consists of at least the alpha, beta, beta', gamma, delta, epsilon and zeta subunits.

It localises to the cytoplasm. The protein resides in the golgi apparatus membrane. It is found in the cytoplasmic vesicle. Its subcellular location is the COPI-coated vesicle membrane. In terms of biological role, the coatomer is a cytosolic protein complex that binds to dilysine motifs and reversibly associates with Golgi non-clathrin-coated vesicles, which further mediate biosynthetic protein transport from the ER, via the Golgi up to the trans Golgi network. Coatomer complex is required for budding from Golgi membranes, and is essential for the retrograde Golgi-to-ER transport of dilysine-tagged proteins. This chain is Coatomer subunit gamma (copG), found in Dictyostelium discoideum (Social amoeba).